Reading from the N-terminus, the 330-residue chain is Cytoplasmic envelopment protein 2 (330 aa).

The protein belongs to the herpesviridae cytoplasmic envelopment protein 2 family. Interacts with cytoplasmic envelopment protein 3 and with the capsid.

Its subcellular location is the virion tegument. It is found in the host cytoplasm. It localises to the host nucleus. Plays a critical role in cytoplasmic virus egress. Participates in the final step of tegumentation and envelope acquisition within the host cytoplasm by directly interacting with the capsid. Upon virion binding to target cell, a signaling cascade is triggered to disrupt the interaction with the capsid, thereby preparing capsid uncoating. The protein is Cytoplasmic envelopment protein 2 (33) of Saimiriine herpesvirus 2 (strain 11) (SaHV-2).